The following is a 150-amino-acid chain: UPF0756 membrane protein plu2726 (150 aa).

4 consecutive transmembrane segments (helical) span residues 8–28 (LLVL…TVTL), 51–71 (YGLT…IASG), 88–108 (LLAI…VSLM), and 123–143 (VLGV…AGIL).

It belongs to the UPF0756 family.

The protein resides in the cell membrane. The chain is UPF0756 membrane protein plu2726 from Photorhabdus laumondii subsp. laumondii (strain DSM 15139 / CIP 105565 / TT01) (Photorhabdus luminescens subsp. laumondii).